The following is a 1230-amino-acid chain: Cullin-associated NEDD8-dissociated protein 1 (1230 aa).

An N-acetylalanine modification is found at Ala2. HEAT repeat units lie at residues 2-39, 44-81, 83-119, 131-165, 171-208, 210-247, 248-282, 289-366, 370-407, 424-467, 471-510, and 515-552; these read ASASYHISNLLEKMTSSDKDFRFMATNDLMTELQKDSI, DSERKVVKMILKLLEDKNGEVQNLAVKCLGPLVSKVKE, QVETIVDTLCTNMLSDKEQLRDISSIGLKTVIGELPP, CKKITGRLTSAIAKQEDVSVQLEALDIMADMLSRQ, NFHPSILTCLLPQLTSPRLAVRKRTIIALGHLVMSCGN, VFVDLIEHLLSELSKNDSMSTTRTYIQCIAAISRQAGH, RIGEYLEKIIPLVVKFCNVDDDELREYCIQAFESF, EVYP…TRHE, EFYKTVSPALISRFKEREENVKADVFHAYLSLLKQTRP, PLTM…VLPG, QHIPVLVPGIIFSLNDKSSSSNLKIDALSCLYVILCNHSP, and PHVQALVPPVVACVGDPFYKITSEALLVTQQLVKVIRP. Lys55 carries the N6-acetyllysine modification. The segment at 315 to 344 is disordered; that stretch reads DEDEDENAMDADGGDDDDQGSDDEYSDDDD. Phosphoserine is present on Ser335. A Phosphoserine modification is found at Ser558. HEAT repeat units follow at residues 563–602, 606–643, 646–683, 688–725, 729–768, 770–808, 809–845, 852–889, 890–927, 928–960, 961–998, 1002–1039, 1043–1097, 1099–1133, and 1140–1189; these read PYIKDLFTCTIKRLKAADIDQEVKERAISCMGQIICNLGD, SDLPNTLQIFLERLKNEITRLTTVKALTLIAGSPLKID, PVLGEGVPILASFLRKNQRALKLGTLSALDILIKNYSD, AMIDAVLDELPPLISESDMHVSQMAISFLTTLAKVYPS, KISGSILNELIGLVRSPLLQGGALSAMLDFFQALVVTGTN, LGYMDLLRMLTGPVYSQSTALTHKQSYYSIAKCVAALTR, ACPKEGPAVVGQFIQDVKNSRSTDSIRLLALLSLGEV, SGQLELKSVILEAFSSPSEEVKSAASYALGSISVGNLP, EYLPFVLQEITSQPKRQYLLLHSLKEIISSASVVGLKP, YVENIWALLLKHCECAEEGTRNVVAECLGKLTL, IDPETLLPRLKGYLISGSSYARSSVVTAVKFTISDHPQ, PLLKNCIGDFLKTLEDPDLNVRRVALVTFNSAAHNKPS, DLLD…DSCL, RLDIFEFLNHVEDGLKDHYDIKMLTFLMLVRLSTL, and QRLD…IPEA. At Lys971 the chain carries N6-acetyllysine.

The protein belongs to the CAND family. Interacts with TBP. Part of a complex that contains CUL1 and RBX1. Interacts with unneddylated cullins: interacts with CUL1, CUL2, CUL3, CUL4A, CUL4B and CUL5. Does not bind neddylated CUL1. Interaction with cullins is abolished in presence of COMMD1, which antagonizes with CAND1 for interacting with cullins. Interacts with ERCC6. Interacts with DCUN1D1, DCUN1D2, DCUN1D3, DCUN1D4 and DCUN1D5; these interactions are bridged by cullins and strongly inhibits the neddylation of cullins.

It localises to the cytoplasm. Its subcellular location is the nucleus. In terms of biological role, key assembly factor of SCF (SKP1-CUL1-F-box protein) E3 ubiquitin ligase complexes that promotes the exchange of the substrate-recognition F-box subunit in SCF complexes, thereby playing a key role in the cellular repertoire of SCF complexes. Acts as a F-box protein exchange factor. The exchange activity of CAND1 is coupled with cycles of neddylation conjugation: in the deneddylated state, cullin-binding CAND1 binds CUL1-RBX1, increasing dissociation of the SCF complex and promoting exchange of the F-box protein. Probably plays a similar role in other cullin-RING E3 ubiquitin ligase complexes. This is Cullin-associated NEDD8-dissociated protein 1 (CAND1) from Bos taurus (Bovine).